Consider the following 83-residue polypeptide: Defensin-like protein 194 (83 aa).

A signal peptide spans 1 to 27; it reads MAMKSVSNFAIFLILFLVTSEISEIEA. 4 disulfides stabilise this stretch: cysteine 32/cysteine 78, cysteine 44/cysteine 68, cysteine 53/cysteine 73, and cysteine 57/cysteine 75.

The protein belongs to the DEFL family. Protease inhibitor I18 (RTI/MTI-2) subfamily.

It is found in the secreted. The protein is Defensin-like protein 194 (ATTI3) of Arabidopsis thaliana (Mouse-ear cress).